A 311-amino-acid chain; its full sequence is HTH-type transcriptional regulator DsdC (311 aa).

The HTH lysR-type domain occupies 15-72 (WQLSKMHTFEVAARHQSFALAAEELSLSPSAVSHRINQLEEELGIQLFVRSHRKVELT). The H-T-H motif DNA-binding region spans 32–51 (FALAAEELSLSPSAVSHRIN).

This sequence belongs to the LysR transcriptional regulatory family.

In terms of biological role, regulates the expression of the dsdX-dsdA operon. The polypeptide is HTH-type transcriptional regulator DsdC (Escherichia coli (strain K12)).